Consider the following 289-residue polypeptide: Phosphatidylglycerol--prolipoprotein diacylglyceryl transferase (289 aa).

A run of 7 helical transmembrane segments spans residues 23-43, 61-81, 99-119, 125-145, 199-219, 226-246, and 259-279; these read ALHW…WLAV, LLYM…VLFY, GGMS…WFAH, FFQV…AGRL, SQLY…NLFI, GSVS…TEFF, and LFSM…LMMV. Arginine 144 lines the a 1,2-diacyl-sn-glycero-3-phospho-(1'-sn-glycerol) pocket.

This sequence belongs to the Lgt family.

It localises to the cell inner membrane. It catalyses the reaction L-cysteinyl-[prolipoprotein] + a 1,2-diacyl-sn-glycero-3-phospho-(1'-sn-glycerol) = an S-1,2-diacyl-sn-glyceryl-L-cysteinyl-[prolipoprotein] + sn-glycerol 1-phosphate + H(+). Its pathway is protein modification; lipoprotein biosynthesis (diacylglyceryl transfer). Catalyzes the transfer of the diacylglyceryl group from phosphatidylglycerol to the sulfhydryl group of the N-terminal cysteine of a prolipoprotein, the first step in the formation of mature lipoproteins. This is Phosphatidylglycerol--prolipoprotein diacylglyceryl transferase from Pectobacterium carotovorum subsp. carotovorum (strain PC1).